Consider the following 358-residue polypeptide: Probable D-xylulose reductase A (358 aa).

The Zn(2+) site is built by Cys47, His72, and Glu73. An NAD(+)-binding site is contributed by Gly182–Gly187.

It belongs to the zinc-containing alcohol dehydrogenase family. Requires Zn(2+) as cofactor.

The catalysed reaction is xylitol + NAD(+) = D-xylulose + NADH + H(+). It functions in the pathway carbohydrate degradation; L-arabinose degradation via L-arabinitol; D-xylulose 5-phosphate from L-arabinose (fungal route): step 4/5. Xylitol dehydrogenase which catalyzes the conversion of xylitol to D-xylulose. Xylose is a major component of hemicelluloses such as xylan. Most fungi utilize D-xylose via three enzymatic reactions, xylose reductase (XR), xylitol dehydrogenase (XDH), and xylulokinase, to form xylulose 5-phosphate, which enters pentose phosphate pathway. This is Probable D-xylulose reductase A (xdhA) from Aspergillus niger (strain ATCC MYA-4892 / CBS 513.88 / FGSC A1513).